We begin with the raw amino-acid sequence, 356 residues long: NADH-quinone oxidoreductase subunit H (356 aa).

9 helical membrane-spanning segments follow: residues 16-36 (IAVL…AFLL), 52-72 (PNVV…KFVF), 85-105 (LYLL…AVVP), 117-137 (VGIL…IIGG), 163-183 (IGFI…SEII), 201-221 (WPMP…ISAL), 254-274 (FMVG…ILFF), 295-315 (AWYF…FAMV), and 334-354 (IFLP…VYGP).

This sequence belongs to the complex I subunit 1 family. In terms of assembly, NDH-1 is composed of 14 different subunits. Subunits NuoA, H, J, K, L, M, N constitute the membrane sector of the complex.

It localises to the cell inner membrane. The catalysed reaction is a quinone + NADH + 5 H(+)(in) = a quinol + NAD(+) + 4 H(+)(out). In terms of biological role, NDH-1 shuttles electrons from NADH, via FMN and iron-sulfur (Fe-S) centers, to quinones in the respiratory chain. The immediate electron acceptor for the enzyme in this species is believed to be ubiquinone. Couples the redox reaction to proton translocation (for every two electrons transferred, four hydrogen ions are translocated across the cytoplasmic membrane), and thus conserves the redox energy in a proton gradient. This subunit may bind ubiquinone. In Maricaulis maris (strain MCS10) (Caulobacter maris), this protein is NADH-quinone oxidoreductase subunit H.